Here is a 223-residue protein sequence, read N- to C-terminus: FAD-dependent monooxygenase imqC (223 aa).

Residues 139–141, Y189, and D210 contribute to the FAD site; that span reads RFY.

Belongs to the PheA/TfdB FAD monooxygenase family.

It participates in secondary metabolite biosynthesis. Its function is as follows. FAD-dependent monooxygenase; part of the gene cluster that mediates the biosynthesis of imizoquins A to D, tripeptide-derived alkaloids that serve a protective role against oxidative stress that are essential for normal germination. ImqB is a canonical three-module NRPS that assembles the tripeptide backbone of the imizoquins via condensation of Trp, Tyr, and Leu-derived precursors. N-methylation by imqF and phenol oxidation by imqC, followed by cyclization via the FAD-dependent oxidase imqH carry out the three-step transformation of L-tyrosine into tetrahydroisoquinoline. Importantly, this sequence requires the presence of a free amine in the tyrosine moiety, indicating that isoquinoline formation occurs prior to peptide bond formation. The imidazolidin-4-one ring of imizoquins could form following additional oxidation of the methyl-derived bridgehead carbon by imqH. Lastly, O-methylation by imqG and leucine hydroxylation by imqE complete biosynthesis of the imizoquins. The protein is FAD-dependent monooxygenase imqC of Aspergillus flavus (strain ATCC 200026 / FGSC A1120 / IAM 13836 / NRRL 3357 / JCM 12722 / SRRC 167).